Consider the following 318-residue polypeptide: MPNIVLFSGSSHQDLSQRVADRLGLELGKVVTKKFSNQETSVEIGESVRGEDVYIIQSGCGEINDNLMELLIMINACKIASSSRVTAVIPCFPYARQDKKDKSRAPISAKLVANMLSVAGADHIITMDLHASQIQGFFDIPVDNLYAEPAVLQWIRENITEWRNCIIVSPDAGGAKRVTSIADRLNVEFALIHKERKKANEVDRMVLVGDVKDRVAILVDDMADTCGTICHAADKLLSAGATKVYAILTHGIFSGPAISRINNAAFEAVVVTNTIPQEDKMKHCSKIQVIDISMILAEAIRRTHNGESVSYLFSHVPL.

96 to 101 (RQDKKD) contacts ATP. Residues aspartate 128, histidine 130, aspartate 139, and aspartate 143 each coordinate Mg(2+). Histidine 130 serves as a coordination point for ATP. The binding of phosphoribosylpyrophosphate stretch occupies residues 212–227 (KDRVAILVDDMADTCG).

Belongs to the ribose-phosphate pyrophosphokinase family. In terms of assembly, homodimer. The active form is probably a hexamer composed of 3 homodimers. Mg(2+) serves as cofactor.

The catalysed reaction is D-ribose 5-phosphate + ATP = 5-phospho-alpha-D-ribose 1-diphosphate + AMP + H(+). It participates in metabolic intermediate biosynthesis; 5-phospho-alpha-D-ribose 1-diphosphate biosynthesis; 5-phospho-alpha-D-ribose 1-diphosphate from D-ribose 5-phosphate (route I): step 1/1. Activated by magnesium and inorganic phosphate. Its function is as follows. Catalyzes the synthesis of phosphoribosylpyrophosphate (PRPP) that is essential for nucleotide synthesis. The sequence is that of Ribose-phosphate pyrophosphokinase 2 (Prps2) from Rattus norvegicus (Rat).